The primary structure comprises 950 residues: Leucine--tRNA ligase (950 aa).

The short motif at P72 to H83 is the 'HIGH' region element. The short motif at K722 to S726 is the 'KMSKS' region element. K725 provides a ligand contact to ATP.

Belongs to the class-I aminoacyl-tRNA synthetase family.

Its subcellular location is the cytoplasm. The catalysed reaction is tRNA(Leu) + L-leucine + ATP = L-leucyl-tRNA(Leu) + AMP + diphosphate. This is Leucine--tRNA ligase from Mycobacterium sp. (strain KMS).